We begin with the raw amino-acid sequence, 1774 residues long: 6-methylsalicylic acid synthase (1774 aa).

A compositionally biased stretch (polar residues) spans 1–14 (MHSAATSTYPSGKT). The disordered stretch occupies residues 1–21 (MHSAATSTYPSGKTSPAPVGT). One can recognise a Ketosynthase family 3 (KS3) domain in the interval 32-457 (SNDVAVVGMA…GTVSHAVIEE (426 aa)). The interval 186 to 238 (RISYHLNLMGPSTAVDAACASSLVAIHHGVQAIRLGESKVAIVGGVNALCGPG) is acyltransferase. Active-site for beta-ketoacyl synthase activity residues include Cys204, His339, and His379. The acetyl/malonyl transferases stretch occupies residues 642 to 676 (NGITPQAVIGHSVGEIAASVVAGALSPAEGALIVT). Ser653 functions as the For malonyltransferase activity in the catalytic mechanism. The N-terminal hotdog fold stretch occupies residues 926-1045 (HTLLGQRIPV…AYWDRKVAGS (120 aa)). One can recognise a PKS/mFAS DH domain in the interval 926–1202 (HTLLGQRIPV…FSEIEGTPGV (277 aa)). Residue His958 is the Proton acceptor; for dehydratase activity of the active site. Residues 1059–1202 (VTKLADNFSI…FSEIEGTPGV (144 aa)) form a C-terminal hotdog fold region. Asp1123 (proton donor; for dehydratase activity) is an active-site residue. The interval 1403 to 1450 (GPRLLPRPEGTYLITGGLGVLGLEVADFLVEKGARRLLLISRRALPPR) is 2-oxoacyl reductase. 1419–1424 (GLGVLG) contacts NADP(+). The Carrier domain occupies 1698-1772 (AYLDEKIRGC…HLAVWFAEKL (75 aa)). The residue at position 1732 (Ser1732) is an O-(pantetheine 4'-phosphoryl)serine.

In terms of assembly, homomultimer.

The enzyme catalyses 3 malonyl-CoA + acetyl-CoA + NADPH + 3 H(+) = 6-methylsalicylate + 3 CO2 + NADP(+) + 4 CoA + H2O. The protein operates within mycotoxin biosynthesis; patulin biosynthesis. This multifunctional enzyme is a polyketide synthase. It catalyzes a total of 11 steps by seven different component enzymes, in the biosynthesis of the antibiotic patulin. The protein is 6-methylsalicylic acid synthase of Penicillium patulum (Penicillium griseofulvum).